The sequence spans 757 residues: Subtilisin-like protease SBT1.7 (757 aa).

Positions 1–24 (MSSSFLSSTAFFLLLCLGFCHVSS) are cleaved as a signal peptide. The propeptide occupies 25–106 (SSSDQGTYIV…VLPEHRYELH (82 aa)). In terms of domain architecture, Inhibitor I9 spans 31 to 106 (TYIVHMAKSQ…VLPEHRYELH (76 aa)). Positions 102–610 (RYELHTTRTP…AGHVSPTTAT (509 aa)) constitute a Peptidase S8 domain. Aspartate 139 serves as the catalytic Charge relay system. The N-linked (GlcNAc...) asparagine glycan is linked to asparagine 170. The interval 196–219 (PIDESKESRSPRDDDGHGTHTSST) is disordered. Basic and acidic residues predominate over residues 198-213 (DESKESRSPRDDDGHG). The active-site Charge relay system is the histidine 212. N-linked (GlcNAc...) asparagine glycosylation is found at asparagine 352, asparagine 376, and asparagine 379. Serine 542 acts as the Charge relay system in catalysis. N-linked (GlcNAc...) asparagine glycosylation is found at asparagine 631 and asparagine 644.

It belongs to the peptidase S8 family. As to expression, expressed in immature siliques and at lower levels in stems and flowers. Widely expressed at low levels.

The protein resides in the secreted. The protein localises to the cell wall. Activated by calcium. Inhibited by the serine protease inhibitors 4-(2-aminoethyl)benzenesulphonyl fluoride (AEBSF), PMSF, di-isopropyl phosphofluoridate (DFP) and soybean trypsin inhibitor (SBTI). Not inhibited by benzamidine or iodoacetamide. Leupeptin and pepstatin A have a minor inhibitory action. Its function is as follows. Serine protease. Has a substrate preference for the hydrophobic residues Phe and Ala and the basic residue Asp in the P1 position, and for Asp, Leu or Ala in the P1' position. Essential for mucilage release from seed coats. Triggers the accumulation and/or activation of cell wall modifying enzymes necessary either for the loosening of the outer primary cell wall, or to facilitate swelling of the mucilage. In Arabidopsis thaliana (Mouse-ear cress), this protein is Subtilisin-like protease SBT1.7.